Consider the following 397-residue polypeptide: Ornithine aminotransferase (397 aa).

Lys255 bears the N6-(pyridoxal phosphate)lysine mark.

Belongs to the class-III pyridoxal-phosphate-dependent aminotransferase family. OAT subfamily. Requires pyridoxal 5'-phosphate as cofactor.

It localises to the cytoplasm. It catalyses the reaction a 2-oxocarboxylate + L-ornithine = L-glutamate 5-semialdehyde + an L-alpha-amino acid. It participates in amino-acid biosynthesis; L-proline biosynthesis; L-glutamate 5-semialdehyde from L-ornithine: step 1/1. Catalyzes the interconversion of ornithine to glutamate semialdehyde. This is Ornithine aminotransferase from Macrococcus caseolyticus (strain JCSC5402) (Macrococcoides caseolyticum).